Consider the following 313-residue polypeptide: DDRGK domain-containing protein 1 (313 aa).

A helical transmembrane segment spans residues 1–28 (MVSPVVYLVVAALLVGLILFLTRGRGRA). Positions 1 to 113 (MVSPVVYLVV…IEKPVETHLS (113 aa)) are mediates interaction with CDK5RAP3. The Cytoplasmic portion of the chain corresponds to 29–313 (AAAAQEPLHN…GRETPAQAPA (285 aa)). The disordered stretch occupies residues 40-88 (EVPAAAGRVARPQPLEPEEQRAAGRPRRRRDLGSRLQAQRRAQRVAWAD). Phosphoserine is present on residues S73 and S113. The segment covering 73 to 87 (SRLQAQRRAQRVAWA) has biased composition (low complexity). Positions 117-215 (GAKKLRKLEE…MTEEQSHSFL (99 aa)) are mediates interaction with TRIP4. The disordered stretch occupies residues 130–185 (RKAQREAEEAEREERKRLESQREAEWKKEEERLRLEEEQKEEEERKAQEEQAQREH). The UFM1-interacting motif (UFIM) motif lies at 194-208 (TFVVVEEGVGETMTE). Positions 215–313 (LAEFINYIKQ…GRETPAQAPA (99 aa)) are mediates interaction with UFL1. The region spanning 228 to 272 (VLLEDLASQVGLRTQDTINRIQDLLAEGTLTGVIDDRGKFIYITP) is the PCI domain. K266 is covalently cross-linked (Glycyl lysine isopeptide (Lys-Gly) (interchain with G-Cter in UFM1)).

This sequence belongs to the DDRGK1 family. Component of the UFM1 ribosome E3 ligase (UREL) complex, composed of UFL1, DDRGK1 and CDK5RAP3. Interacts with (unphosphorylated) ERN1/IRE1-alpha; interaction is dependent on UFM1 and takes place in response to endoplasmic reticulum stress, regulating ERN1/IRE1-alpha stability. Interacts with NFKBIA. Interacts with SOX9. In terms of processing, ubiquitinated. Ubiquitination probably triggers proteasomal degradation and is negatively regulated by UFL1, the enzyme involved in the ufmylation of DDRGK1. Post-translationally, ufmylated; conjugated to ubiquitin-like protein UFM1, probably at Lys-266 by UFL1. The relevance of ufmylation is however unclear: as DDRGK1 acts as a substrate adapter for ufmylation, it is uncertain whether ufmylation is a collateral effect of the ufmylation process or whether it is required to regulate its activity.

The protein resides in the endoplasmic reticulum membrane. Component of the UFM1 ribosome E3 ligase (UREL) complex, a multiprotein complex that catalyzes ufmylation of endoplasmic reticulum-docked proteins. The UREL complex plays a key role in ribosome recycling by mediating mono-ufmylation of the RPL26/uL24 subunit of the 60S ribosome following ribosome dissociation: ufmylation weakens the junction between post-termination 60S subunits and SEC61 translocons, promoting release and recycling of the large ribosomal subunit from the endoplasmic reticulum membrane. Ufmylation of RPL26/uL24 and subsequent 60S ribosome recycling either take place after normal termination of translation or after ribosome stalling during cotranslational translocation at the endoplasmic reticulum. Within the UREL complex, DDRGK1 tethers the complex to the endoplasmic reticulum membrane to restrict its activity to endoplasmic reticulum-docked ribosomes and acts as an ufmylation 'reader': following RPL26/uL24 ufmylation, DDRGK1 specifically binds to ufmylated RPL26/uL24 via its UFIM motif, resulting in stable association between the 60S ribosome and the UREL complex, followed by dissociation of the 60S ribosome subunit from the endoplasmic reticulum membrane. The UREL complex is also involved in reticulophagy in response to endoplasmic reticulum stress by promoting ufmylation of proteins such as CYB5R3 and RPN1, thereby promoting lysosomal degradation of ufmylated proteins. Ufmylation-dependent reticulophagy inhibits the unfolded protein response (UPR) by regulating ERN1/IRE1-alpha stability. Acts as a regulator of immunity by promoting differentiation of B-cells into plasma cells: acts by promoting expansion of the endoplasmic reticulum and regulating the unfolded protein response (UPR). May also be required for TRIP4 ufmylation. May play a role in NF-kappa-B-mediated transcription through regulation of the phosphorylation and the degradation of NFKBIA, the inhibitor of NF-kappa-B. Plays a role in cartilage development through SOX9, inhibiting the ubiquitin-mediated proteasomal degradation of this transcriptional regulator. Required for stabilization and ufmylation of ATG9A. This chain is DDRGK domain-containing protein 1, found in Bos taurus (Bovine).